Reading from the N-terminus, the 790-residue chain is VTAAPAATAATAATPATAALNFAATAATPATPATPALIFAATAATAATPATAALNFAATAATPATAATPALIFAAAAATAATPATAALNFAATAATPATAATPALIFAATAATAATPATPAFHFAATAATPATAATPALIFAATAATAATPATPAFHFAATAATPATAATPALIFAATAATAATPATAALNFAATAATPATAATPALIFAATAATAATPATAALNFAATAATAATPATAACNFAATAATPATAATPALIFAATAATAATPATAACNFAATAATPATAATPALIFAATAATAATPATAALNFAATAATPATAATPALIFAATAATAATPATAALNFAATAATPATAATPALIFAATAATAATPATAALNFAATAATAATPATPAFNFAATAATPATAATPALIFAATAATAATPATAALNFAATAATPATAATPALIFAATAATAATPATAALHFAATAATAATPATAALNFAATAATPATAATPALIFAATAATAATPATAAFNFAATAATAATPATAALNFAATAATPATAATPALIFAATAATAATPATAALNFAATAATPATAATPALIFAATAATAATPATPAFHFAATAATPATAATPALIFAATAATAATPATAALNFAATAATAATPATAALNFAATAATPATAATPALIFAATAATAATPATAALNFAATAATPATAATPALIFAATAATAATPATAAFNFAATAATAATPATAATPALIFAATAATAATPATPATPALIFAATAATAATPATPALNFAATAATAATTAARG.

Positions 1-5 (VTAAP) are excised as a propeptide.

O-glycosylated; contains disaccharide galactose-N-acetylgalactosamine attached to threonines in AFGP8 and AFGP7. As to expression, synthesized by the liver and secreted into the blood from which they become distributed to almost the entire extracellular space.

It localises to the secreted. Its function is as follows. Antifreeze proteins lower the blood freezing point. The sequence is that of Ice-structuring glycoprotein (afgp8) from Notothenia neglecta (Yellowbelly rockcod).